The primary structure comprises 644 residues: 3-isopropylmalate dehydratase (644 aa).

[4Fe-4S] cluster-binding residues include C400, C460, and C463. The disordered stretch occupies residues 521-568; that stretch reads SEIPGTPKQSPRQEVVAEFESEEDDVDSSSVDSAPVATPPSTGDSAGM. Over residues 537–547 the composition is skewed to acidic residues; that stretch reads AEFESEEDDVD.

Belongs to the aconitase/IPM isomerase family. As to quaternary structure, monomer. [4Fe-4S] cluster serves as cofactor.

The enzyme catalyses (2R,3S)-3-isopropylmalate = (2S)-2-isopropylmalate. Its pathway is amino-acid biosynthesis; L-leucine biosynthesis; L-leucine from 3-methyl-2-oxobutanoate: step 2/4. In terms of biological role, catalyzes the isomerization between 2-isopropylmalate and 3-isopropylmalate, via the formation of 2-isopropylmaleate. In Mucor circinelloides f. lusitanicus (Mucor racemosus var. lusitanicus), this protein is 3-isopropylmalate dehydratase (LEUA).